Here is a 152-residue protein sequence, read N- to C-terminus: Plant UBX domain-containing protein 12 (152 aa).

Positions 32–61 (KRFSEEESEETENTTNSSNAVFGFPNLPEE) are disordered. The region spanning 67 to 150 (DQSVLCRICV…GLANSLVSVT (84 aa)) is the UBX domain.

In Arabidopsis thaliana (Mouse-ear cress), this protein is Plant UBX domain-containing protein 12.